A 373-amino-acid chain; its full sequence is MVNTNQFIPGLEGVIASETKISFLDTVNSEIVIKGYDLLALSKTKGYLDIVHLLLEGTIPNEAEKQHLEETLKQEYDVPDEIIQVLSLLPKTAHPMDALRTGVSVLASFDTELLNREHSTNLKRAYQLLGKIPNIVANSYHILHSEEPVQPLQDLSYSANFLYMITGKKPTELEEKIFDRSLVLYSEHELPNSTFTARVIASTLSDLYGALTGAVASLKGHLHGGANEAVMEMLQDAQTVEGFKHLLHDKLSKKEKIMGFGHRVYMKKMDPRAAMMKEALKELSAVNGDDLLLQMCEAGEQIMREEKGLFPNLDYYAAPVYWKLGIPIPLYTPIFFSSRTVGLCAHVMEQHENNRIFRPRVLYTGARNLRVED.

Residues histidine 262 and aspartate 314 contribute to the active site.

This sequence belongs to the citrate synthase family. In terms of assembly, homohexamer.

It catalyses the reaction oxaloacetate + acetyl-CoA + H2O = citrate + CoA + H(+). It functions in the pathway carbohydrate metabolism; tricarboxylic acid cycle; isocitrate from oxaloacetate: step 1/2. The protein is Citrate synthase (ctsA) of Heyndrickxia coagulans (Weizmannia coagulans).